A 236-amino-acid chain; its full sequence is Pyridoxal 5'-phosphate synthase subunit PdxT (236 aa).

An L-glutamine-binding site is contributed by 61–63 (GES). Catalysis depends on cysteine 93, which acts as the Nucleophile. L-glutamine-binding positions include arginine 127 and 163–164 (IR). Residues histidine 215 and glutamate 217 each act as charge relay system in the active site.

The protein belongs to the glutaminase PdxT/SNO family. As to quaternary structure, in the presence of PdxS, forms a dodecamer of heterodimers. Only shows activity in the heterodimer.

It carries out the reaction aldehydo-D-ribose 5-phosphate + D-glyceraldehyde 3-phosphate + L-glutamine = pyridoxal 5'-phosphate + L-glutamate + phosphate + 3 H2O + H(+). The enzyme catalyses L-glutamine + H2O = L-glutamate + NH4(+). It participates in cofactor biosynthesis; pyridoxal 5'-phosphate biosynthesis. Its function is as follows. Catalyzes the hydrolysis of glutamine to glutamate and ammonia as part of the biosynthesis of pyridoxal 5'-phosphate. The resulting ammonia molecule is channeled to the active site of PdxS. The protein is Pyridoxal 5'-phosphate synthase subunit PdxT of Pseudarthrobacter chlorophenolicus (strain ATCC 700700 / DSM 12829 / CIP 107037 / JCM 12360 / KCTC 9906 / NCIMB 13794 / A6) (Arthrobacter chlorophenolicus).